Reading from the N-terminus, the 159-residue chain is 2-C-methyl-D-erythritol 2,4-cyclodiphosphate synthase (159 aa).

The a divalent metal cation site is built by Asp10 and His12. 4-CDP-2-C-methyl-D-erythritol 2-phosphate contacts are provided by residues 10-12 (DVH) and 36-37 (HS). His44 lines the a divalent metal cation pocket. Residues 58 to 60 (DIG), 63 to 67 (FPDTD), 102 to 108 (AQAPKMA), 134 to 137 (TTTE), Phe141, and Arg144 each bind 4-CDP-2-C-methyl-D-erythritol 2-phosphate.

This sequence belongs to the IspF family. As to quaternary structure, homotrimer. Requires a divalent metal cation as cofactor.

The enzyme catalyses 4-CDP-2-C-methyl-D-erythritol 2-phosphate = 2-C-methyl-D-erythritol 2,4-cyclic diphosphate + CMP. It functions in the pathway isoprenoid biosynthesis; isopentenyl diphosphate biosynthesis via DXP pathway; isopentenyl diphosphate from 1-deoxy-D-xylulose 5-phosphate: step 4/6. Its function is as follows. Involved in the biosynthesis of isopentenyl diphosphate (IPP) and dimethylallyl diphosphate (DMAPP), two major building blocks of isoprenoid compounds. Catalyzes the conversion of 4-diphosphocytidyl-2-C-methyl-D-erythritol 2-phosphate (CDP-ME2P) to 2-C-methyl-D-erythritol 2,4-cyclodiphosphate (ME-CPP) with a corresponding release of cytidine 5-monophosphate (CMP). The chain is 2-C-methyl-D-erythritol 2,4-cyclodiphosphate synthase from Shewanella piezotolerans (strain WP3 / JCM 13877).